The sequence spans 329 residues: Ribosomal RNA small subunit methyltransferase H (329 aa).

Residues glycine 34–tyrosine 36, aspartate 52, phenylalanine 79, aspartate 100, and glutamine 107 each bind S-adenosyl-L-methionine. The disordered stretch occupies residues glycine 285 to glycine 329.

Belongs to the methyltransferase superfamily. RsmH family.

It localises to the cytoplasm. It catalyses the reaction cytidine(1402) in 16S rRNA + S-adenosyl-L-methionine = N(4)-methylcytidine(1402) in 16S rRNA + S-adenosyl-L-homocysteine + H(+). Specifically methylates the N4 position of cytidine in position 1402 (C1402) of 16S rRNA. This is Ribosomal RNA small subunit methyltransferase H from Bradyrhizobium diazoefficiens (strain JCM 10833 / BCRC 13528 / IAM 13628 / NBRC 14792 / USDA 110).